A 228-amino-acid polypeptide reads, in one-letter code: Eukaryotic translation initiation factor 4E-2 (228 aa).

Residues C130 and C134 are joined by a disulfide bond.

It belongs to the eukaryotic initiation factor 4E family. In terms of assembly, eIF4F is a multi-subunit complex, the composition of which varies with external and internal environmental conditions. It is composed of at least eIF4A, eIF4E and eIF4G. eIF4E is also known to interact with other partners. As to expression, highly expressed in all somatic tissues.

Recognizes and binds the 7-methylguanosine-containing mRNA cap during an early step in the initiation of protein synthesis and facilitates ribosome binding by inducing the unwinding of the mRNAs secondary structures. All 5 eIF4E proteins bind monomethyl cap structures. Only ife-1, ife-2 and ife-5 bind trimethyl cap structures which result from trans-splicing. Translation of trimethyl cap structure mRNAs may be regulated by intracellular redox state; disulfide bonds change the width and depth of the cap-binding cavity determining selectivity to mRNA caps. Probably by regulating mRNA translation in somatic cells, negatively regulates lifespan independently of daf-2/insulin and let-363/TOR pathways. Negatively regulates resistance to oxidative stress. May play a role in embryonic development. The polypeptide is Eukaryotic translation initiation factor 4E-2 (ife-2) (Caenorhabditis elegans).